Consider the following 623-residue polypeptide: DNA-directed RNA polymerase subunit beta' (623 aa).

Zn(2+)-binding residues include C70, C72, C85, and C88. Residues D466, D468, and D470 each contribute to the Mg(2+) site.

The protein belongs to the RNA polymerase beta' chain family. RpoC1 subfamily. As to quaternary structure, in plastids the minimal PEP RNA polymerase catalytic core is composed of four subunits: alpha, beta, beta', and beta''. When a (nuclear-encoded) sigma factor is associated with the core the holoenzyme is formed, which can initiate transcription. It depends on Mg(2+) as a cofactor. Zn(2+) is required as a cofactor.

The protein localises to the plastid. Its subcellular location is the chloroplast. It carries out the reaction RNA(n) + a ribonucleoside 5'-triphosphate = RNA(n+1) + diphosphate. Its function is as follows. DNA-dependent RNA polymerase catalyzes the transcription of DNA into RNA using the four ribonucleoside triphosphates as substrates. This Guillardia theta (Cryptophyte) protein is DNA-directed RNA polymerase subunit beta'.